The sequence spans 1248 residues: ATP-dependent helicase/nuclease subunit A (1248 aa).

A UvrD-like helicase ATP-binding domain is found at 4–480 (TKWTKEQYAA…ILLFKNFRSR (477 aa)). 25-32 (AAAGAGKT) is an ATP binding site. Residues 523 to 820 (ETVVGGAIEL…RLMSIHKSKG (298 aa)) enclose the UvrD-like helicase C-terminal domain.

The protein belongs to the helicase family. AddA subfamily. As to quaternary structure, heterodimer of AddA and AddB/RexB. Requires Mg(2+) as cofactor.

It catalyses the reaction Couples ATP hydrolysis with the unwinding of duplex DNA by translocating in the 3'-5' direction.. The enzyme catalyses ATP + H2O = ADP + phosphate + H(+). Functionally, the heterodimer acts as both an ATP-dependent DNA helicase and an ATP-dependent, dual-direction single-stranded exonuclease. Recognizes the chi site generating a DNA molecule suitable for the initiation of homologous recombination. The AddA nuclease domain is required for chi fragment generation; this subunit has the helicase and 3' -&gt; 5' nuclease activities. The chain is ATP-dependent helicase/nuclease subunit A from Ruminiclostridium cellulolyticum (strain ATCC 35319 / DSM 5812 / JCM 6584 / H10) (Clostridium cellulolyticum).